Here is a 451-residue protein sequence, read N- to C-terminus: Glucose-6-phosphate isomerase (451 aa).

Glutamate 291 (proton donor) is an active-site residue. Active-site residues include histidine 312 and lysine 426.

It belongs to the GPI family.

It localises to the cytoplasm. It catalyses the reaction alpha-D-glucose 6-phosphate = beta-D-fructose 6-phosphate. The protein operates within carbohydrate biosynthesis; gluconeogenesis. Its pathway is carbohydrate degradation; glycolysis; D-glyceraldehyde 3-phosphate and glycerone phosphate from D-glucose: step 2/4. Functionally, catalyzes the reversible isomerization of glucose-6-phosphate to fructose-6-phosphate. The sequence is that of Glucose-6-phosphate isomerase from Caldanaerobacter subterraneus subsp. tengcongensis (strain DSM 15242 / JCM 11007 / NBRC 100824 / MB4) (Thermoanaerobacter tengcongensis).